The sequence spans 499 residues: Aprataxin and PNK-like factor (499 aa).

Residues 1–108 enclose the FHA-like domain; that stretch reads MPSDFFLQPL…RVFSAESEVE (108 aa). Ser116 bears the Phosphoserine; by ATM mark. Disordered regions lie at residues 134–183, 197–292, and 305–358; these read VNLP…TQRK, DQSL…KTNK, and VSKH…DTAD. Residues 141-152 are compositionally biased toward polar residues; it reads TGASQLQGSPEI. Ser149 carries the post-translational modification Phosphoserine. Residues 182–191 carry the KBM motif; it reads RKRILPAWML. A compositionally biased stretch (polar residues) spans 239 to 248; sequence PSGNSKSVSA. Residues 251–261 show a composition bias toward basic and acidic residues; sequence DPGKKCRKADQ. Over residues 264–278 the composition is skewed to low complexity; the sequence is PGVSSENVPESSSSN. Basic and acidic residues predominate over residues 281–292; sequence KDPDVDIVKTNK. The span at 340-349 shows a compositional bias: low complexity; the sequence is PESSSAPSSP. A glycoprotein contacts are provided by Arg371, Tyr376, Tyr381, and Arg382. Residues 372–393 form a PBZ-type 1 zinc finger; it reads TACMYGANCYRRNPLHFQHFSH. Residues 401-411 form a flexible linker region; it reads EVHGTDEGVIG. Residues 414-435 form a PBZ-type 2 zinc finger; the sequence is PECPYGASCYRKNPQHKMEYRH. Positions 418, 423, and 424 each coordinate a glycoprotein. The segment at 440-499 is disordered; the sequence is ARVALDEDDDDVGQPSDDEDEEDYEPTDEDSDWHPGKDDEEQEDVDELLKEAKSSLHLKH. Over residues 445-470 the composition is skewed to acidic residues; sequence DEDDDDVGQPSDDEDEEDYEPTDEDS. The NAP1L motif signature appears at 463–487; it reads YEPTDEDSDWHPGKDDEEQEDVDEL.

It belongs to the APLF family. As to quaternary structure, interacts with LIG4. Interacts with PARP1. Interacts with XRCC4. Interacts (via KBM motif) with XRCC5 and XRCC6; promoting recruitment to DNA damage sites. Interacts with XRCC1. Interacts (via C-terminal disordered region) with histones; interacts with histone H2A, H2B and H3-H4. Poly-ADP-ribosylated. In addition to binding non covalently poly-ADP-ribose via its PBZ-type zinc fingers, the protein is also covalently poly-ADP-ribosylated by PARP1. In terms of processing, phosphorylated in an ATM-dependent manner upon double-strand DNA break.

The protein localises to the nucleus. It localises to the chromosome. Its subcellular location is the cytoplasm. The protein resides in the cytosol. Histone chaperone involved in single-strand and double-strand DNA break repair. Recruited to sites of DNA damage through interaction with branched poly-ADP-ribose chains, a polymeric post-translational modification synthesized transiently at sites of chromosomal damage to accelerate DNA strand break repair reactions. Following recruitment to DNA damage sites, acts as a histone chaperone that mediates histone eviction during DNA repair and promotes recruitment of histone variant MACROH2A1. Also has a nuclease activity: displays apurinic-apyrimidinic (AP) endonuclease and 3'-5' exonuclease activities in vitro. Also able to introduce nicks at hydroxyuracil and other types of pyrimidine base damage. Together with PARP3, promotes the retention of the LIG4-XRCC4 complex on chromatin and accelerate DNA ligation during non-homologous end-joining (NHEJ). Also acts as a negative regulator of cell pluripotency by promoting histone exchange. Required for the embryo implantation during the epithelial to mesenchymal transition in females. The sequence is that of Aprataxin and PNK-like factor (Aplf) from Mus musculus (Mouse).